The following is a 104-amino-acid chain: Pyrimidine/purine nucleoside phosphorylase (104 aa).

It belongs to the nucleoside phosphorylase PpnP family.

The enzyme catalyses a purine D-ribonucleoside + phosphate = a purine nucleobase + alpha-D-ribose 1-phosphate. It catalyses the reaction adenosine + phosphate = alpha-D-ribose 1-phosphate + adenine. The catalysed reaction is cytidine + phosphate = cytosine + alpha-D-ribose 1-phosphate. It carries out the reaction guanosine + phosphate = alpha-D-ribose 1-phosphate + guanine. The enzyme catalyses inosine + phosphate = alpha-D-ribose 1-phosphate + hypoxanthine. It catalyses the reaction thymidine + phosphate = 2-deoxy-alpha-D-ribose 1-phosphate + thymine. The catalysed reaction is uridine + phosphate = alpha-D-ribose 1-phosphate + uracil. It carries out the reaction xanthosine + phosphate = alpha-D-ribose 1-phosphate + xanthine. Functionally, catalyzes the phosphorolysis of diverse nucleosides, yielding D-ribose 1-phosphate and the respective free bases. Can use uridine, adenosine, guanosine, cytidine, thymidine, inosine and xanthosine as substrates. Also catalyzes the reverse reactions. This is Pyrimidine/purine nucleoside phosphorylase from Leptospira borgpetersenii serovar Hardjo-bovis (strain L550).